Here is a 251-residue protein sequence, read N- to C-terminus: Ubiquinone/menaquinone biosynthesis C-methyltransferase UbiE (251 aa).

S-adenosyl-L-methionine contacts are provided by residues Thr-74, Asp-95, 123 to 124 (NA), and Ser-140.

It belongs to the class I-like SAM-binding methyltransferase superfamily. MenG/UbiE family.

The catalysed reaction is a 2-demethylmenaquinol + S-adenosyl-L-methionine = a menaquinol + S-adenosyl-L-homocysteine + H(+). The enzyme catalyses a 2-methoxy-6-(all-trans-polyprenyl)benzene-1,4-diol + S-adenosyl-L-methionine = a 5-methoxy-2-methyl-3-(all-trans-polyprenyl)benzene-1,4-diol + S-adenosyl-L-homocysteine + H(+). It participates in quinol/quinone metabolism; menaquinone biosynthesis; menaquinol from 1,4-dihydroxy-2-naphthoate: step 2/2. The protein operates within cofactor biosynthesis; ubiquinone biosynthesis. Methyltransferase required for the conversion of demethylmenaquinol (DMKH2) to menaquinol (MKH2) and the conversion of 2-polyprenyl-6-methoxy-1,4-benzoquinol (DDMQH2) to 2-polyprenyl-3-methyl-6-methoxy-1,4-benzoquinol (DMQH2). This is Ubiquinone/menaquinone biosynthesis C-methyltransferase UbiE from Yersinia enterocolitica serotype O:8 / biotype 1B (strain NCTC 13174 / 8081).